A 111-amino-acid polypeptide reads, in one-letter code: Putative FAD-linked sulfhydryl oxidase 347L (111 aa).

Residues T2–W109 form the ERV/ALR sulfhydryl oxidase domain. Residues C49 and C52 are joined by a disulfide bond.

Belongs to the IIV-6 347L family. Requires FAD as cofactor.

The enzyme catalyses 2 R'C(R)SH + O2 = R'C(R)S-S(R)CR' + H2O2. In terms of biological role, FAD-dependent sulfhydryl oxidase that catalyzes disulfide bond formation. The sequence is that of Putative FAD-linked sulfhydryl oxidase 347L from Invertebrate iridescent virus 6 (IIV-6).